Consider the following 319-residue polypeptide: Ferrochelatase (319 aa).

The Fe cation site is built by histidine 193 and glutamate 274.

It belongs to the ferrochelatase family.

The protein localises to the cytoplasm. The catalysed reaction is heme b + 2 H(+) = protoporphyrin IX + Fe(2+). It functions in the pathway porphyrin-containing compound metabolism; protoheme biosynthesis; protoheme from protoporphyrin-IX: step 1/1. Its function is as follows. Catalyzes the ferrous insertion into protoporphyrin IX. The protein is Ferrochelatase of Actinobacillus pleuropneumoniae serotype 7 (strain AP76).